The following is a 329-amino-acid chain: Glutamyl-Q tRNA(Asp) synthetase (329 aa).

Residues 8 to 12 and glutamate 44 each bind L-glutamate; that span reads RLAPS. A 'HIGH' region motif is present at residues 11-21; it reads PSPTGAQHLGN. Residues cysteine 100, cysteine 102, tyrosine 129, and cysteine 133 each coordinate Zn(2+). L-glutamate-binding residues include tyrosine 196 and arginine 214. The 'KMSKS' region motif lies at 252–256; sequence RLAKR. ATP is bound at residue lysine 255.

This sequence belongs to the class-I aminoacyl-tRNA synthetase family. GluQ subfamily. Zn(2+) serves as cofactor.

Functionally, catalyzes the tRNA-independent activation of glutamate in presence of ATP and the subsequent transfer of glutamate onto a tRNA(Asp). Glutamate is transferred on the 2-amino-5-(4,5-dihydroxy-2-cyclopenten-1-yl) moiety of the queuosine in the wobble position of the QUC anticodon. This chain is Glutamyl-Q tRNA(Asp) synthetase, found in Rhodopirellula baltica (strain DSM 10527 / NCIMB 13988 / SH1).